We begin with the raw amino-acid sequence, 627 residues long: Dual specificity testis-specific protein kinase 1 (627 aa).

The disordered stretch occupies residues 1–36; the sequence is MAGERPPLRGPGPGEAPGEGPGGAGGGPGRGRPSSY. A compositionally biased stretch (gly residues) spans 11–30; the sequence is PGPGEAPGEGPGGAGGGPGR. The region spanning 52–309 is the Protein kinase domain; that stretch reads FDCAEKIGAG…TEITQHLEQI (258 aa). ATP-binding positions include 58-66 and Lys81; that span reads IGAGFFSEV. Asp170 functions as the Proton acceptor in the catalytic mechanism. At Ser215 the chain carries Phosphoserine; by autocatalysis. A compositionally biased stretch (low complexity) spans 316–330; sequence ATPLAKPPLTKAPLT. 4 disordered regions span residues 316–373, 436–485, 500–519, and 532–565; these read ATPL…SWGD, RCRS…GLAP, CSSASQPWSPRSGPPLNNNP, and REPWNRAQHSLPRAAALERTEPSPPPSAPREPEE. Arg338 carries the post-translational modification Omega-N-methylarginine. A compositionally biased stretch (basic and acidic residues) spans 348–357; sequence PDPRLSRSRS. Positions 421–525 are required for interaction with YWHAB; that stretch reads VTTPDILVQP…NNNPPAVVVN (105 aa). Positions 528 to 625 are required for interaction with PARVA; the sequence is QGWAREPWNR…PTPSLQLPGA (98 aa). A required for interaction with SPRED1 and SPRY2. Required for TESK1-mediated dephosphorylation of SPRY2 and SPRY2 inhibition of ERK phosphorylation region spans residues 528-627; it reads QGWAREPWNR…PSLQLPGARS (100 aa).

This sequence belongs to the protein kinase superfamily. TKL Ser/Thr protein kinase family. As to quaternary structure, interacts (via both C- and N-termini) with SPRY4 (via C-terminus); the interaction inhibits TESK1 kinase activity. Interacts with TAOK1; the interaction inhibits TAOK1 kinase activity. Interacts (via C-terminus) with SPRED1 (via C-terminus); the interaction inhibits TESK1 kinase activity. Interacts (via C-terminus) with PARVA/PARVIN (via C-terminus); the interaction inhibits TESK1 kinase activity. Interacts with YWHAB/14-3-3 beta; the interaction is dependent on the phosphorylation of TESK1 Ser-439 and inhibits TESK1 kinase activity. Interacts with SPRY1, SPRY3 and SPRED2. Interacts (via C-terminus) with SPRY2 (via C-terminus); the interaction disrupts SPRY2 interaction with PPP2CA/PP2A-C, possibly by vesicular sequestration of SPRY2. Therefore dephosphorylation of SPRY2 by the serine/threonine-protein phosphatase 2A (PP2A) holoenzyme is lost, inhibiting its interaction with GRB2. The cofactor is Mg(2+). Mn(2+) is required as a cofactor. Autophosphorylated on serine and tyrosine residues. In terms of tissue distribution, expressed in testes and brain (at protein level).

Its subcellular location is the cytoplasm. The protein resides in the perinuclear region. It localises to the cytoskeleton. It is found in the microtubule organizing center. The protein localises to the centrosome. Its subcellular location is the cell projection. The protein resides in the lamellipodium. The enzyme catalyses L-seryl-[protein] + ATP = O-phospho-L-seryl-[protein] + ADP + H(+). It catalyses the reaction L-threonyl-[protein] + ATP = O-phospho-L-threonyl-[protein] + ADP + H(+). It carries out the reaction L-tyrosyl-[protein] + ATP = O-phospho-L-tyrosyl-[protein] + ADP + H(+). Activated by autophosphorylation on Ser-215. Kinase activity is inhibited by SPRED1. Functionally, dual specificity protein kinase activity catalyzing autophosphorylation and phosphorylation of exogenous substrates on both serine/threonine and tyrosine residues. Regulates the cellular cytoskeleton by enhancing actin stress fiber formation via phosphorylation of cofilin and by preventing microtubule breakdown via inhibition of TAOK1/MARKK kinase activity. Inhibits podocyte motility via regulation of actin cytoskeletal dynamics and phosphorylation of CFL1. Positively regulates integrin-mediated cell spreading, via phosphorylation of cofilin. Suppresses ciliogenesis via multiple pathways; phosphorylation of CFL1, suppression of ciliary vesicle directional trafficking to the ciliary base, and by facilitating YAP1 nuclear localization where it acts as a transcriptional corepressor of the TEAD4 target genes AURKA and PLK1. Probably plays a central role at and after the meiotic phase of spermatogenesis. This Mus musculus (Mouse) protein is Dual specificity testis-specific protein kinase 1 (Tesk1).